Here is a 360-residue protein sequence, read N- to C-terminus: Flavin-dependent trigonelline monooxygenase, oxygenase component (360 aa).

This sequence belongs to the bacterial luciferase oxidoreductase family. Homodimer. The trigonelline monooxygenase is composed of a reductase component TgnA and an oxygenase component TgnB.

It carries out the reaction N-methylnicotinate + FMNH2 + O2 = (Z)-2-((N-methylformamido)methylene)-5-hydroxybutanolactone + FMN + H(+). The enzyme catalyses N-methylnicotinate + FADH2 + O2 = (Z)-2-((N-methylformamido)methylene)-5-hydroxybutanolactone + FAD + H(+). Its function is as follows. Involved in the degradation of the pyridine ring of trigonelline (TG; N-methylnicotinate) into succinate and methylamine as carbon and nitrogen sources, respectively. Catalyzes the insertion of two oxygens, followed by a ring cleavage of trigonelline to yield (Z)-2-((N-methylformamido)methylene)-5-hydroxybutyrolactone (MFMB). It is able to use reduced FMN or FAD. The polypeptide is Flavin-dependent trigonelline monooxygenase, oxygenase component (Acinetobacter baylyi (strain ATCC 33305 / BD413 / ADP1)).